The primary structure comprises 406 residues: Tyrosine--tRNA ligase (406 aa).

Tyr35 contributes to the L-tyrosine binding site. A 'HIGH' region motif is present at residues 40-49 (ATSASLHIGH). Residues Tyr167 and Gln171 each contribute to the L-tyrosine site. The short motif at 227 to 231 (KMGKS) is the 'KMSKS' region element. Lys230 provides a ligand contact to ATP. Residues 341 to 405 (ILLVDLMVLA…IGKKKILRIV (65 aa)) enclose the S4 RNA-binding domain.

This sequence belongs to the class-I aminoacyl-tRNA synthetase family. TyrS type 1 subfamily. Homodimer.

Its subcellular location is the cytoplasm. It carries out the reaction tRNA(Tyr) + L-tyrosine + ATP = L-tyrosyl-tRNA(Tyr) + AMP + diphosphate + H(+). Functionally, catalyzes the attachment of tyrosine to tRNA(Tyr) in a two-step reaction: tyrosine is first activated by ATP to form Tyr-AMP and then transferred to the acceptor end of tRNA(Tyr). This is Tyrosine--tRNA ligase from Borrelia duttonii (strain Ly).